Reading from the N-terminus, the 124-residue chain is UPF0344 protein OB1184 (124 aa).

The next 4 helical transmembrane spans lie at 3–23 (HMHI…LVMY), 33–53 (IIHM…GILT), 62–82 (MPIL…VAMM), and 104–124 (IALV…FLFI).

The protein belongs to the UPF0344 family.

Its subcellular location is the cell membrane. This chain is UPF0344 protein OB1184, found in Oceanobacillus iheyensis (strain DSM 14371 / CIP 107618 / JCM 11309 / KCTC 3954 / HTE831).